The sequence spans 209 residues: Uracil phosphoribosyltransferase (209 aa).

Residues Arg79, Arg104, and Asp131–Ser139 contribute to the 5-phospho-alpha-D-ribose 1-diphosphate site. Residues Ile194 and Gly199–Ala201 contribute to the uracil site. Position 200 (Asp200) interacts with 5-phospho-alpha-D-ribose 1-diphosphate.

This sequence belongs to the UPRTase family. Requires Mg(2+) as cofactor.

The enzyme catalyses UMP + diphosphate = 5-phospho-alpha-D-ribose 1-diphosphate + uracil. It functions in the pathway pyrimidine metabolism; UMP biosynthesis via salvage pathway; UMP from uracil: step 1/1. Allosterically activated by GTP. In terms of biological role, catalyzes the conversion of uracil and 5-phospho-alpha-D-ribose 1-diphosphate (PRPP) to UMP and diphosphate. This Exiguobacterium sibiricum (strain DSM 17290 / CCUG 55495 / CIP 109462 / JCM 13490 / 255-15) protein is Uracil phosphoribosyltransferase.